Reading from the N-terminus, the 63-residue chain is Conotoxin Pn-B01411 (63 aa).

Positions 1–22 (MRCFPVFIILLLLMASAPSFDA) are cleaved as a signal peptide. Positions 23 to 49 (RPKTEDDVPLSSFRDNLKRTLRTLLDP) are excised as a propeptide. Ile62 bears the Isoleucine amide mark.

The protein belongs to the conotoxin T superfamily. Contains 2 disulfide bonds that can be either 'C1-C3, C2-C4' or 'C1-C4, C2-C3', since these disulfide connectivities have been observed for conotoxins with cysteine framework V (for examples, see AC P0DQQ7 and AC P81755). Expressed by the venom duct.

Its subcellular location is the secreted. In Conus pennaceus (Feathered cone), this protein is Conotoxin Pn-B01411.